The following is a 262-amino-acid chain: MVLIRVLANLLILQLSYAQKSSELVIGGDECNINEHNFLVALYEYWSQSFLCGGTLINGEWVLTAAHCDRKHILIYVGVHDRSVQFDKEQRRFPKEKYFFNCRNNFTKWDKDIMLIRLNKPVSYSEHIAPLSLPSSPPIVGSVCRVMGWGTIKSPQETLPDVPHCANINLLDYEVCRTAHPQFRLPATSRILCAGVLEGGIDTCHRDSGGPLICNGEFQGIVSWGDGPCAQPDKPALYSKVFDHLDWIQNIIAGSETVNCPS.

The signal sequence occupies residues 1-18 (MVLIRVLANLLILQLSYA). A propeptide spanning residues 19-262 (QKSSELVIGG…AGSETVNCPS (244 aa)) is cleaved from the precursor. The region spanning 25-253 (VIGGDECNIN…HLDWIQNIIA (229 aa)) is the Peptidase S1 domain. 6 disulfide bridges follow: Cys-31/Cys-165, Cys-52/Cys-68, Cys-102/Cys-260, Cys-144/Cys-214, Cys-176/Cys-193, and Cys-204/Cys-229. The Charge relay system role is filled by His-67. Residue Asn-105 is glycosylated (N-linked (GlcNAc...) asparagine). The active-site Charge relay system is the Asp-112. Ser-208 serves as the catalytic Charge relay system.

It belongs to the peptidase S1 family. Snake venom subfamily. In terms of assembly, monomer. In terms of tissue distribution, expressed by the venom gland.

The protein resides in the secreted. Functionally, thrombin-like snake venom serine protease. Displays a specificity similar to trypsin. Releases only fibrinopeptide A in the conversion of fibrinogen to fibrin. Reversibly increases the permeability of the blood brain barrier (BBB) in mice. Induces the barrel rotation syndrome in mice, which is manifested by gyroxin-like, rapid rolling motions. This syndrome may be due to its effect on BBB permeability, and certainly also to other actions affecting endogenous substrates present in the endothelium, nervous tissues or blood. Also shows a moderate inhibitory activity on the human voltage-gated potassium channel Kv10.1/KCNH1/EAG1 (58% current inhibition at 5 uM). It blocks Kv10.1/KCNH1/EAG1 in a time and dose-dependent manner and with a mechanism independent of its enzymatic activity. It may have a preference in interacting with Kv10.1/KCNH1/EAG1 in its closed state, since the inhibitory effect of the toxin is decreased at more depolarized potentials. The polypeptide is Thrombin-like enzyme gyroxin B1.3 (Crotalus durissus terrificus (South American rattlesnake)).